The chain runs to 212 residues: uncharacterized protein (212 aa).

Positions arginine 47–arginine 129 are disordered.

This is an uncharacterized protein from Caenorhabditis elegans.